We begin with the raw amino-acid sequence, 1538 residues long: Pentafunctional AROM polypeptide (1538 aa).

The segment at 1–384 (MGVPTKISIL…HEPRASTVSN (384 aa)) is 3-dehydroquinate synthase. NAD(+)-binding positions include 44–46 (DTN), 81–84 (ESSK), 114–116 (GGV), and Asp119. Arg130 serves as a coordination point for 7-phospho-2-dehydro-3-deoxy-D-arabino-heptonate. NAD(+) is bound at residue 139-140 (TT). Asp146 and Lys152 together coordinate 7-phospho-2-dehydro-3-deoxy-D-arabino-heptonate. NAD(+) is bound at residue Lys161. Asn162 contacts 7-phospho-2-dehydro-3-deoxy-D-arabino-heptonate. NAD(+)-binding positions include 179–182 (FLNT) and Asn190. Glu194 is a Zn(2+) binding site. 7-phospho-2-dehydro-3-deoxy-D-arabino-heptonate-binding positions include 194-197 (EVIK) and Lys250. Glu260 serves as the catalytic Proton acceptor; for 3-dehydroquinate synthase activity. 7-phospho-2-dehydro-3-deoxy-D-arabino-heptonate contacts are provided by residues 264 to 268 (RNLLN) and His271. Residue His271 coordinates Zn(2+). Residue His275 is the Proton acceptor; for 3-dehydroquinate synthase activity of the active site. The 7-phospho-2-dehydro-3-deoxy-D-arabino-heptonate site is built by His287 and Lys356. Zn(2+) is bound at residue His287. The EPSP synthase stretch occupies residues 397-842 (VSPGVPKGLD…WDCLSQTFKV (446 aa)). Catalysis depends on Cys824, which acts as the For EPSP synthase activity. Residues 866–973 (ASIFIIGMRG…RRKQNTFFVS (108 aa)) are shikimate kinase. 872–879 (GMRGAGKT) is a binding site for ATP. Residues 974 to 1194 (LTLPDLGLAA…AAPGQLSARE (221 aa)) are 3-dehydroquinase. His1097 serves as the catalytic Proton acceptor; for 3-dehydroquinate dehydratase activity. The Schiff-base intermediate with substrate; for 3-dehydroquinate dehydratase activity role is filled by Lys1125. Residues 1207–1538 (AKKFAVIGNP…YEHPVLNHSS (332 aa)) form a shikimate dehydrogenase region.

In the N-terminal section; belongs to the sugar phosphate cyclases superfamily. Dehydroquinate synthase family. It in the 2nd section; belongs to the EPSP synthase family. This sequence in the 3rd section; belongs to the shikimate kinase family. The protein in the 4th section; belongs to the type-I 3-dehydroquinase family. In the C-terminal section; belongs to the shikimate dehydrogenase family. As to quaternary structure, homodimer. It depends on Zn(2+) as a cofactor.

The protein localises to the cytoplasm. The catalysed reaction is 7-phospho-2-dehydro-3-deoxy-D-arabino-heptonate = 3-dehydroquinate + phosphate. The enzyme catalyses 3-dehydroquinate = 3-dehydroshikimate + H2O. It catalyses the reaction shikimate + NADP(+) = 3-dehydroshikimate + NADPH + H(+). It carries out the reaction shikimate + ATP = 3-phosphoshikimate + ADP + H(+). The catalysed reaction is 3-phosphoshikimate + phosphoenolpyruvate = 5-O-(1-carboxyvinyl)-3-phosphoshikimate + phosphate. The protein operates within metabolic intermediate biosynthesis; chorismate biosynthesis; chorismate from D-erythrose 4-phosphate and phosphoenolpyruvate: step 2/7. It functions in the pathway metabolic intermediate biosynthesis; chorismate biosynthesis; chorismate from D-erythrose 4-phosphate and phosphoenolpyruvate: step 3/7. It participates in metabolic intermediate biosynthesis; chorismate biosynthesis; chorismate from D-erythrose 4-phosphate and phosphoenolpyruvate: step 4/7. Its pathway is metabolic intermediate biosynthesis; chorismate biosynthesis; chorismate from D-erythrose 4-phosphate and phosphoenolpyruvate: step 5/7. The protein operates within metabolic intermediate biosynthesis; chorismate biosynthesis; chorismate from D-erythrose 4-phosphate and phosphoenolpyruvate: step 6/7. Its function is as follows. The AROM polypeptide catalyzes 5 consecutive enzymatic reactions in prechorismate polyaromatic amino acid biosynthesis. The sequence is that of Pentafunctional AROM polypeptide from Ajellomyces capsulatus (strain NAm1 / WU24) (Darling's disease fungus).